The chain runs to 278 residues: MAIRKYKPTTPGRRGSSVSDFAEITRDHPEKSLVRPLHGRGGRNAHGRITTRHKGGGHKRAYRVIDFRRHDKDGVNAKVAHIEYDPNRTANIALLHYLDGEKRYIIAPQGLKQGAIVESGANADIKPGNNLPLRNIPAGTLVHAVELRPGGGAKMARSAGASIQLLGKEGSYASLRMPSGEIRRVDVRCRATVGEVGNAEQANINWGKAGRMRWKGKRPTVRGVVMNPVDHPHGGGEGKTSGGRHPVSPWGKPEGRTRKPKKASDKLIVRRRRTGKKR.

2 disordered regions span residues 1–58 (MAIR…GGGH) and 224–278 (VVMN…GKKR). Residues 23-33 (EITRDHPEKSL) show a composition bias toward basic and acidic residues. Over residues 37-58 (LHGRGGRNAHGRITTRHKGGGH) the composition is skewed to basic residues. Over residues 253 to 268 (PEGRTRKPKKASDKLI) the composition is skewed to basic and acidic residues. The span at 269-278 (VRRRRTGKKR) shows a compositional bias: basic residues.

The protein belongs to the universal ribosomal protein uL2 family. As to quaternary structure, part of the 50S ribosomal subunit. Forms a bridge to the 30S subunit in the 70S ribosome.

In terms of biological role, one of the primary rRNA binding proteins. Required for association of the 30S and 50S subunits to form the 70S ribosome, for tRNA binding and peptide bond formation. It has been suggested to have peptidyltransferase activity; this is somewhat controversial. Makes several contacts with the 16S rRNA in the 70S ribosome. The chain is Large ribosomal subunit protein uL2 from Mycolicibacterium vanbaalenii (strain DSM 7251 / JCM 13017 / BCRC 16820 / KCTC 9966 / NRRL B-24157 / PYR-1) (Mycobacterium vanbaalenii).